Reading from the N-terminus, the 791-residue chain is Probable phosphoketolase (791 aa).

It belongs to the XFP family. Thiamine diphosphate is required as a cofactor.

This Chlorobaculum tepidum (strain ATCC 49652 / DSM 12025 / NBRC 103806 / TLS) (Chlorobium tepidum) protein is Probable phosphoketolase.